Reading from the N-terminus, the 262-residue chain is 4-hydroxy-2-oxo-heptane-1,7-dioate aldolase (262 aa).

Residue histidine 45 is the Proton acceptor of the active site. Glutamine 147 contacts substrate. A divalent metal cation is bound at residue glutamate 149. Residues alanine 174 and aspartate 175 each coordinate substrate. An a divalent metal cation-binding site is contributed by aspartate 175.

Belongs to the HpcH/HpaI aldolase family. As to quaternary structure, homohexamer; trimer of dimers. The cofactor is a divalent metal cation.

It carries out the reaction 4-hydroxy-2-oxoheptanedioate = succinate semialdehyde + pyruvate. The protein operates within aromatic compound metabolism; 4-hydroxyphenylacetate degradation; pyruvate and succinate semialdehyde from 4-hydroxyphenylacetate: step 7/7. Its function is as follows. Catalyzes the reversible retro-aldol cleavage of 4-hydroxy-2-ketoheptane-1,7-dioate (HKHD) to pyruvate and succinic semialdehyde. This chain is 4-hydroxy-2-oxo-heptane-1,7-dioate aldolase, found in Shigella boydii serotype 4 (strain Sb227).